Reading from the N-terminus, the 801-residue chain is Vacuolar transporter chaperone complex subunit 4 (801 aa).

Residues 1-692 are Cytoplasmic-facing; it reads MPFSKAWRSA…MLKWTEHATR (692 aa). Positions 215, 286, 288, 312, 325, and 391 each coordinate ATP. A Mn(2+)-binding site is contributed by Glu-441. Lys-473 is a catalytic residue. A helical transmembrane segment spans residues 693–713; sequence LGLVGLGVIQFGNSMTLPGDV. Topologically, residues 714–723 are vacuolar; that stretch reads TQLSSFWRAN. Residues 724–744 traverse the membrane as a helical segment; it reads FHIVLGIALVLVALMTLMYAL. Topologically, residues 745–768 are cytoplasmic; it reads MTFKARSRRVYARKKIRFDDSWGP. Residues 769–789 form a helical membrane-spanning segment; the sequence is TVLTVFLAFGICVIAMMHILG. Residues 790–801 lie on the Vacuolar side of the membrane; the sequence is RYGPMLTGDDNF.

This sequence belongs to the VTC4 family. In terms of assembly, the VTC core complex is an integral membrane heterooligomer composed of at least the catalytic subunit vtc4 and the accessory subunits vtc1 and vtc2. vtc1 is a small membrane protein without hydrophilic domain. Vtc2 and vtc4 are related and have 2 hydrophilic domains that face the cytosol, an N-terminal SPX domain and the central core domain. The central core in vtc4 is the catalytic domain. The cofactor is Mn(2+).

It localises to the acidocalcisome membrane. The enzyme catalyses [phosphate](n) + ATP = [phosphate](n+1) + ADP. Its activity is regulated as follows. Activity of the enzyme is Mn(2+)-dependent and enhanced in the presence of pyrophosphate (PPi). In terms of biological role, component of a polyphosphate synthase complex that utilizes ATP to synthesize and translocate polyphosphate to acidocalcisomes in epimastigotes, insect-stages of Trypanosoma brucei. Catalytic subunit of the vacuolar transporter chaperone (VTC) complex. The VTC complex acts as a vacuolar polyphosphate polymerase that catalyzes the synthesis of inorganic polyphosphate (polyP) via transfer of phosphate from ATP to a growing polyP chain, releasing ADP. VTC exposes its catalytic domain vtc4 to the cytosol, where the growing polyP chain winds through a tunnel-shaped pocket, integrating cytoplasmic polymer synthesis with polyP membrane translocation. The VTC complex carries 9 vacuolar transmembrane domains, which are likely to constitute the translocation channel into the organelle lumen. PolyP synthesis is tightly coupled to its transport into the vacuole lumen, in order to avoid otherwise toxic intermediates in the cytosol, and it depends on the proton gradient across the membrane, formed by V-ATPase. The VTC complex also plays a role in vacuolar membrane fusion. Essential for infection and parasite survival in the mammalian host. The polypeptide is Vacuolar transporter chaperone complex subunit 4 (Trypanosoma cruzi (strain CL Brener)).